Here is a 65-residue protein sequence, read N- to C-terminus: Small, acid-soluble spore protein Tlp (65 aa).

This sequence belongs to the Tlp family.

The protein localises to the spore core. The protein is Small, acid-soluble spore protein Tlp of Bacillus anthracis (strain A0248).